The following is a 161-amino-acid chain: Peptidyl-prolyl cis-trans isomerase 10 (161 aa).

The PPIase cyclophilin-type domain occupies 1–153 (MSVTLHTTSG…VQQKIQNVTI (153 aa)).

This sequence belongs to the cyclophilin-type PPIase family. PPIL3 subfamily.

It carries out the reaction [protein]-peptidylproline (omega=180) = [protein]-peptidylproline (omega=0). In terms of biological role, PPIases accelerate the folding of proteins. It catalyzes the cis-trans isomerization of proline imidic peptide bonds in oligopeptides. In Caenorhabditis elegans, this protein is Peptidyl-prolyl cis-trans isomerase 10 (cyn-10).